We begin with the raw amino-acid sequence, 655 residues long: Very long-chain specific acyl-CoA dehydrogenase, mitochondrial (655 aa).

Residues Met1–Tyr40 constitute a mitochondrion transit peptide. The interval Ser22–Ala66 is disordered. The catalytic stretch occupies residues Ala41–Lys482. A compositionally biased stretch (polar residues) spans Val49 to Ala59. Lys71 bears the N6-acetyllysine; alternate mark. Lys71 is modified (N6-succinyllysine; alternate). Lys195 bears the N6-succinyllysine mark. Phe214–Ser223 contacts FAD. S-nitrosocysteine is present on Cys237. Lys239 carries the post-translational modification N6-acetyllysine; alternate. Position 239 is an N6-succinyllysine; alternate (Lys239). Residue Trp249–Ser251 participates in FAD binding. Lys276 and Lys278 each carry N6-acetyllysine; alternate. N6-succinyllysine; alternate is present on residues Lys276 and Lys278. Lys298 carries the N6-acetyllysine modification. Lys331 bears the N6-acetyllysine; alternate mark. Lys331 carries the post-translational modification N6-succinyllysine; alternate. N6-succinyllysine is present on Lys372. Substrate is bound at residue Phe461–Gly463. Catalysis depends on Glu462, which acts as the Proton acceptor. Residue Thr464–Asp466 participates in FAD binding. N6-acetyllysine; alternate is present on Lys482. Lys482 bears the N6-succinyllysine; alternate mark. Residues Glu483–Gly516 are membrane-anchoring. Ser517 and Ser522 each carry phosphoserine. Lys550 bears the N6-acetyllysine mark. Lys556 bears the N6-acetyllysine; alternate mark. Position 556 is an N6-succinyllysine; alternate (Lys556). Gln562 provides a ligand contact to FAD. Lys639 carries the post-translational modification N6-succinyllysine.

The protein belongs to the acyl-CoA dehydrogenase family. In terms of assembly, homodimer. Homodimerizes after import into the mitochondrion. The cofactor is FAD. In terms of processing, S-nitrosylation at Cys-237 in liver improves catalytic efficiency.

Its subcellular location is the mitochondrion inner membrane. It carries out the reaction a very-long-chain 2,3-saturated fatty acyl-CoA + oxidized [electron-transfer flavoprotein] + H(+) = a very-long-chain (2E)-enoyl-CoA + reduced [electron-transfer flavoprotein]. It catalyses the reaction dodecanoyl-CoA + oxidized [electron-transfer flavoprotein] + H(+) = (2E)-dodecenoyl-CoA + reduced [electron-transfer flavoprotein]. The catalysed reaction is tetradecanoyl-CoA + oxidized [electron-transfer flavoprotein] + H(+) = (2E)-tetradecenoyl-CoA + reduced [electron-transfer flavoprotein]. The enzyme catalyses oxidized [electron-transfer flavoprotein] + hexadecanoyl-CoA + H(+) = (2E)-hexadecenoyl-CoA + reduced [electron-transfer flavoprotein]. It carries out the reaction octadecanoyl-CoA + oxidized [electron-transfer flavoprotein] + H(+) = (2E)-octadecenoyl-CoA + reduced [electron-transfer flavoprotein]. It catalyses the reaction eicosanoyl-CoA + oxidized [electron-transfer flavoprotein] + H(+) = (2E)-eicosenoyl-CoA + reduced [electron-transfer flavoprotein]. The catalysed reaction is docosanoyl-CoA + oxidized [electron-transfer flavoprotein] + H(+) = (2E)-docosenoyl-CoA + reduced [electron-transfer flavoprotein]. The enzyme catalyses tetracosanoyl-CoA + oxidized [electron-transfer flavoprotein] + H(+) = (2E)-tetracosenoyl-CoA + reduced [electron-transfer flavoprotein]. Its pathway is lipid metabolism; mitochondrial fatty acid beta-oxidation. Its function is as follows. Very long-chain specific acyl-CoA dehydrogenase is one of the acyl-CoA dehydrogenases that catalyze the first step of mitochondrial fatty acid beta-oxidation, an aerobic process breaking down fatty acids into acetyl-CoA and allowing the production of energy from fats. The first step of fatty acid beta-oxidation consists in the removal of one hydrogen from C-2 and C-3 of the straight-chain fatty acyl-CoA thioester, resulting in the formation of trans-2-enoyl-CoA. Among the different mitochondrial acyl-CoA dehydrogenases, very long-chain specific acyl-CoA dehydrogenase acts specifically on acyl-CoAs with saturated 12 to 24 carbons long primary chains. The chain is Very long-chain specific acyl-CoA dehydrogenase, mitochondrial from Bos taurus (Bovine).